Consider the following 60-residue polypeptide: Protein translocase subunit SecE (60 aa).

A helical membrane pass occupies residues 31-51 (VIVVSTVIFFLVFFYALDLGI).

The protein belongs to the SecE/SEC61-gamma family. Component of the Sec protein translocase complex. Heterotrimer consisting of SecY, SecE and SecG subunits. The heterotrimers can form oligomers, although 1 heterotrimer is thought to be able to translocate proteins. Interacts with the ribosome. Interacts with SecDF, and other proteins may be involved. Interacts with SecA.

It is found in the cell membrane. Its function is as follows. Essential subunit of the Sec protein translocation channel SecYEG. Clamps together the 2 halves of SecY. May contact the channel plug during translocation. The polypeptide is Protein translocase subunit SecE (Staphylococcus aureus (strain Mu50 / ATCC 700699)).